A 1439-amino-acid polypeptide reads, in one-letter code: DNA-directed RNA polymerase subunit beta' (1439 aa).

Residues cysteine 70, cysteine 72, cysteine 85, and cysteine 88 each contribute to the Zn(2+) site. Aspartate 504, aspartate 506, and aspartate 508 together coordinate Mg(2+). Zn(2+) contacts are provided by cysteine 862, cysteine 936, cysteine 943, and cysteine 946.

It belongs to the RNA polymerase beta' chain family. As to quaternary structure, the RNAP catalytic core consists of 2 alpha, 1 beta, 1 beta' and 1 omega subunit. When a sigma factor is associated with the core the holoenzyme is formed, which can initiate transcription. The cofactor is Mg(2+). Zn(2+) is required as a cofactor.

The enzyme catalyses RNA(n) + a ribonucleoside 5'-triphosphate = RNA(n+1) + diphosphate. In terms of biological role, DNA-dependent RNA polymerase catalyzes the transcription of DNA into RNA using the four ribonucleoside triphosphates as substrates. The chain is DNA-directed RNA polymerase subunit beta' from Gluconobacter oxydans (strain 621H) (Gluconobacter suboxydans).